The chain runs to 329 residues: NADH-quinone oxidoreductase subunit H (329 aa).

9 helical membrane passes run 9 to 29 (LIKILILVAVFSALGGFATYI), 42 to 62 (GPCYVGPFGLLQVAADGIKLF), 75 to 95 (FIFTLAPIIAMVSAFVSMAPI), 117 to 137 (IGFLFFLAVGAAGIYAPILAG), 154 to 174 (IQLLSFEVVSTLTILAPLMVV), 188 to 208 (GGFLDWLVFKQPLAFVLFLIA), 238 to 258 (LKWGMFFLAEYAHLFAFSFVI), 269 to 291 (WGFIPGGIAILIKAGFFVFLSMW), and 309 to 329 (WKIMLPLALLNIVLTGIIILI).

It belongs to the complex I subunit 1 family. NDH-1 is composed of 14 different subunits. Subunits NuoA, H, J, K, L, M, N constitute the membrane sector of the complex.

The protein resides in the cell inner membrane. It carries out the reaction a quinone + NADH + 5 H(+)(in) = a quinol + NAD(+) + 4 H(+)(out). Its function is as follows. NDH-1 shuttles electrons from NADH, via FMN and iron-sulfur (Fe-S) centers, to quinones in the respiratory chain. The immediate electron acceptor for the enzyme in this species is believed to be ubiquinone. Couples the redox reaction to proton translocation (for every two electrons transferred, four hydrogen ions are translocated across the cytoplasmic membrane), and thus conserves the redox energy in a proton gradient. This subunit may bind ubiquinone. This is NADH-quinone oxidoreductase subunit H from Helicobacter pylori (strain Shi470).